We begin with the raw amino-acid sequence, 72 residues long: Translation initiation factor IF-1 2 (72 aa).

The 72-residue stretch at 1–72 (MAKDDVIQMQ…SRARIVFRTK (72 aa)) folds into the S1-like domain.

The protein belongs to the IF-1 family. As to quaternary structure, component of the 30S ribosomal translation pre-initiation complex which assembles on the 30S ribosome in the order IF-2 and IF-3, IF-1 and N-formylmethionyl-tRNA(fMet); mRNA recruitment can occur at any time during PIC assembly.

The protein localises to the cytoplasm. In terms of biological role, one of the essential components for the initiation of protein synthesis. Stabilizes the binding of IF-2 and IF-3 on the 30S subunit to which N-formylmethionyl-tRNA(fMet) subsequently binds. Helps modulate mRNA selection, yielding the 30S pre-initiation complex (PIC). Upon addition of the 50S ribosomal subunit IF-1, IF-2 and IF-3 are released leaving the mature 70S translation initiation complex. The sequence is that of Translation initiation factor IF-1 2 from Cupriavidus necator (strain ATCC 17699 / DSM 428 / KCTC 22496 / NCIMB 10442 / H16 / Stanier 337) (Ralstonia eutropha).